The chain runs to 453 residues: MISQFFILSSKGDPLIYKDFRGDSGGRDVAELFYRKLTGLPGDESPVVMHHHGRHFIHIRHSGLYLVVTTSENVSPFSLLELLSRLATLLGDYCGSLGEGTISRNVALVYELLDEVLDYGYVQTTSTEMLRNFIQTEAVVSKPFSLFDLSSVGLFGAETQQSKVAPSSAASRPVLSSRSDQSQKNEVFLDVVERLSVLIASNGSLLKVDVQGEIRLKSFLPSGSEMRIGLTEEFCVGKSELRGYGPGIRVDEVSFHSSVNLDEFESHRILRLQPPQGELTVMRYQLSDDLPSPLPFRLFPSVQWDRGSGRLQVYLKLRCDLLSKSQALNVRLHLPLPRGVVSLSQELSSPEQKAELAEGALRWDLPRVQGGSQLSGLFQMDVPGPPGPPSHGLSTSASPLGLGPASLSFELPRHTCSGLQVRFLRLAFRPCGNANPHKWVRHLSHSDAYVIRI.

Positions 184–452 (KNEVFLDVVE…LSHSDAYVIR (269 aa)) constitute an MHD domain.

This sequence belongs to the adaptor complexes medium subunit family. Adaptor protein complex 4 (AP-4) is a heterotetramer composed of two large adaptins (epsilon-type subunit AP4E1 and beta-type subunit AP4B1), a medium adaptin (mu-type subunit AP4M1) and a small adaptin (sigma-type AP4S1). Interacts with tyrosine-based sorting signals on the cytoplasmic tail of cargo proteins such as APP, ATG9A, LAMP2 and NAGPA. Interacts with the C-terminal domain of GRID2. Interacts with GRIA1 and GRIA2; the interaction is indirect via CACNG3. Interacts with CACNG3; CACNG3 associates GRIA1 and GRIA2 with the adaptor protein complex 4 (AP-4) to target them to the somatodendritic compartment of neurons. Interacts with HOOK1 and HOOK2; the interactions are direct, mediate the interaction between FTS-Hook-FHIP (FHF) complex and AP-4 and the perinuclear distribution of AP-4. In terms of tissue distribution, ubiquitous. Highly expressed in testis and lowly expressed in brain and lung.

The protein resides in the golgi apparatus. It is found in the trans-Golgi network membrane. Its subcellular location is the early endosome. In terms of biological role, component of the adaptor protein complex 4 (AP-4). Adaptor protein complexes are vesicle coat components involved both in vesicle formation and cargo selection. They control the vesicular transport of proteins in different trafficking pathways. AP-4 forms a non clathrin-associated coat on vesicles departing the trans-Golgi network (TGN) and may be involved in the targeting of proteins from the trans-Golgi network (TGN) to the endosomal-lysosomal system. It is also involved in protein sorting to the basolateral membrane in epithelial cells and the proper asymmetric localization of somatodendritic proteins in neurons. Within AP-4, the mu-type subunit AP4M1 is directly involved in the recognition and binding of tyrosine-based sorting signals found in the cytoplasmic part of cargos. The adaptor protein complex 4 (AP-4) may also recognize other types of sorting signal. The chain is AP-4 complex subunit mu-1 from Homo sapiens (Human).